The chain runs to 249 residues: UPF0696 protein C11orf68 homolog (249 aa).

The protein belongs to the UPF0696 family.

The chain is UPF0696 protein C11orf68 homolog from Danio rerio (Zebrafish).